Reading from the N-terminus, the 582-residue chain is Transcription factor tau subunit sfc6 (582 aa).

The segment at 1-97 is disordered; it reads MGPKSKEYEN…SAKKQSSKGL (97 aa). Residues 18-39 show a composition bias toward acidic residues; the sequence is EDNDDDGDFVLENVMSEEDIEI. Polar residues predominate over residues 63-87; sequence QPLTPSSSKGAGNEPKSQNSSTTRG. WD repeat units follow at residues 221-262, 268-314, and 326-369; these read TQFL…NFKS, HDWG…VKFH, and FNDS…ECPL.

Component of the TFIIIC complex including sfc1, sfc3, sfc4, sfc6 and sfc7. The subunits are organized in two globular domains, tauA and tauB, connected by a proteolysis-sensitive and flexible linker. Interacts with sfc1, sfc3 and sfc4.

It is found in the nucleus. Functionally, TFIIIC mediates tRNA and 5S RNA gene activation by binding to intragenic promoter elements. Upstream of the transcription start site, TFIIIC assembles the initiation complex TFIIIB-TFIIIC-tDNA, which is sufficient for RNA polymerase III recruitment and function. Part of the tauB domain of TFIIIC that binds boxB DNA promoter sites of tRNA and similar genes. Cooperates with sfc3 in DNA binding. Localizes to chromatin insulator sequence without recruiting RNA polymerase III and plays a role in nuclear organization. The chain is Transcription factor tau subunit sfc6 from Schizosaccharomyces pombe (strain 972 / ATCC 24843) (Fission yeast).